A 325-amino-acid polypeptide reads, in one-letter code: Biotin synthase (325 aa).

The Radical SAM core domain occupies 49–279; sequence VGDKVELCSI…DKNIRYAGGR (231 aa). Cys-66, Cys-70, and Cys-73 together coordinate [4Fe-4S] cluster. Residues Cys-144, Cys-204, and Arg-274 each contribute to the [2Fe-2S] cluster site.

This sequence belongs to the radical SAM superfamily. Biotin synthase family. In terms of assembly, homodimer. [4Fe-4S] cluster serves as cofactor. The cofactor is [2Fe-2S] cluster.

The enzyme catalyses (4R,5S)-dethiobiotin + (sulfur carrier)-SH + 2 reduced [2Fe-2S]-[ferredoxin] + 2 S-adenosyl-L-methionine = (sulfur carrier)-H + biotin + 2 5'-deoxyadenosine + 2 L-methionine + 2 oxidized [2Fe-2S]-[ferredoxin]. The protein operates within cofactor biosynthesis; biotin biosynthesis; biotin from 7,8-diaminononanoate: step 2/2. Functionally, catalyzes the conversion of dethiobiotin (DTB) to biotin by the insertion of a sulfur atom into dethiobiotin via a radical-based mechanism. The sequence is that of Biotin synthase from Carboxydothermus hydrogenoformans (strain ATCC BAA-161 / DSM 6008 / Z-2901).